Consider the following 214-residue polypeptide: Cytochrome b (214 aa).

Helical transmembrane passes span 31–51, 75–96, 111–131, and 176–196; these read FGSM…FLAI, WTMQ…YIHI, WLSG…GYVL, and FFAL…AHIM. Heme b-binding residues include histidine 81 and histidine 95. Histidine 180 and histidine 194 together coordinate heme b. Residue histidine 199 participates in a ubiquinone binding.

This sequence belongs to the cytochrome b family. The cytochrome bc1 complex contains 3 respiratory subunits (MT-CYB, CYC1 and UQCRFS1), 2 core proteins (UQCRC1 and UQCRC2) and probably 6 low-molecular weight proteins. Requires heme b as cofactor.

Its subcellular location is the mitochondrion inner membrane. In terms of biological role, component of the ubiquinol-cytochrome c reductase complex (complex III or cytochrome b-c1 complex) that is part of the mitochondrial respiratory chain. The b-c1 complex mediates electron transfer from ubiquinol to cytochrome c. Contributes to the generation of a proton gradient across the mitochondrial membrane that is then used for ATP synthesis. This is Cytochrome b (MT-CYB) from Elapsoidea semiannulata (Angolan garter snake).